We begin with the raw amino-acid sequence, 698 residues long: Elongation factor G (698 aa).

Residues 10–285 form the tr-type G domain; sequence DKTRNIGIMA…GVVDYLPSPL (276 aa). GTP is bound by residues 19–26, 83–87, and 137–140; these read AHIDAGKT, DTPGH, and NKMD.

This sequence belongs to the TRAFAC class translation factor GTPase superfamily. Classic translation factor GTPase family. EF-G/EF-2 subfamily.

It is found in the cytoplasm. Functionally, catalyzes the GTP-dependent ribosomal translocation step during translation elongation. During this step, the ribosome changes from the pre-translocational (PRE) to the post-translocational (POST) state as the newly formed A-site-bound peptidyl-tRNA and P-site-bound deacylated tRNA move to the P and E sites, respectively. Catalyzes the coordinated movement of the two tRNA molecules, the mRNA and conformational changes in the ribosome. The polypeptide is Elongation factor G (Lactobacillus johnsonii (strain CNCM I-12250 / La1 / NCC 533)).